Reading from the N-terminus, the 335-residue chain is UPF0284 protein TK0853 (335 aa).

Belongs to the UPF0284 family.

This chain is UPF0284 protein TK0853, found in Thermococcus kodakarensis (strain ATCC BAA-918 / JCM 12380 / KOD1) (Pyrococcus kodakaraensis (strain KOD1)).